We begin with the raw amino-acid sequence, 148 residues long: Lysozyme C (148 aa).

Positions 1 to 18 are cleaved as a signal peptide; sequence MKALIVLGLVLLSVTVQG. In terms of domain architecture, C-type lysozyme spans 19–148; it reads KVFERCELAR…VRQYVQGCGV (130 aa). 4 disulfide bridges follow: cysteine 24-cysteine 146, cysteine 48-cysteine 134, cysteine 83-cysteine 99, and cysteine 95-cysteine 113. Residues glutamate 53 and aspartate 71 contribute to the active site.

The protein belongs to the glycosyl hydrolase 22 family. As to quaternary structure, monomer.

It is found in the secreted. The catalysed reaction is Hydrolysis of (1-&gt;4)-beta-linkages between N-acetylmuramic acid and N-acetyl-D-glucosamine residues in a peptidoglycan and between N-acetyl-D-glucosamine residues in chitodextrins.. Lysozymes have primarily a bacteriolytic function; those in tissues and body fluids are associated with the monocyte-macrophage system and enhance the activity of immunoagents. This is Lysozyme C (LYZ) from Homo sapiens (Human).